The sequence spans 172 residues: Propanediol dehydratase small subunit (172 aa).

This sequence belongs to the diol/glycerol dehydratase small subunit family. The propanediol dehydratase enzyme is a heterotrimeric complex composed of a large (PduC), a medium (PduD) and a small (PduE) subunit. Requires adenosylcob(III)alamin as cofactor.

The protein localises to the bacterial microcompartment. It catalyses the reaction propane-1,2-diol = propanal + H2O. It functions in the pathway polyol metabolism; 1,2-propanediol degradation. Functionally, part of the PduCDE complex that catalyzes the dehydration of 1,2-propanediol (1,2-PD) to propionaldehyde. Localized in the bacterial microcompartment (BMC) dedicated to 1,2-PD degradation. In terms of biological role, expression of a cosmid containing the full 21-gene pdu operon in E.coli allows E.coli to grow on 1,2-propanediol (1,2-PD) with the appearance of BMCs in its cytoplasm. Its function is as follows. The 1,2-PD-specific bacterial microcompartment (BMC) concentrates low levels of 1,2-PD catabolic enzymes, concentrates volatile reaction intermediates thus enhancing pathway flux and keeps the level of toxic, mutagenic propionaldehyde low. The chain is Propanediol dehydratase small subunit from Citrobacter freundii.